A 312-amino-acid polypeptide reads, in one-letter code: uncharacterized protein (312 aa).

Belongs to the asfivirus CP312R family.

Its subcellular location is the virion. This is an uncharacterized protein from African swine fever virus (strain Badajoz 1971 Vero-adapted) (Ba71V).